A 118-amino-acid chain; its full sequence is Large ribosomal subunit protein bL20 (118 aa).

Belongs to the bacterial ribosomal protein bL20 family.

In terms of biological role, binds directly to 23S ribosomal RNA and is necessary for the in vitro assembly process of the 50S ribosomal subunit. It is not involved in the protein synthesizing functions of that subunit. The sequence is that of Large ribosomal subunit protein bL20 from Salmonella arizonae (strain ATCC BAA-731 / CDC346-86 / RSK2980).